Here is a 403-residue protein sequence, read N- to C-terminus: Argininosuccinate synthase (403 aa).

Residues 13–21 (AYSGGLDTS) and A40 each bind ATP. 2 residues coordinate L-citrulline: Y92 and S97. G122 is an ATP binding site. The L-aspartate site is built by T124, N128, and D129. N128 is an L-citrulline binding site. The L-citrulline site is built by R132, S181, S190, E266, and Y278.

The protein belongs to the argininosuccinate synthase family. Type 1 subfamily. Homotetramer.

The protein resides in the cytoplasm. It carries out the reaction L-citrulline + L-aspartate + ATP = 2-(N(omega)-L-arginino)succinate + AMP + diphosphate + H(+). It functions in the pathway amino-acid biosynthesis; L-arginine biosynthesis; L-arginine from L-ornithine and carbamoyl phosphate: step 2/3. The polypeptide is Argininosuccinate synthase (Aliivibrio fischeri (strain ATCC 700601 / ES114) (Vibrio fischeri)).